The primary structure comprises 89 residues: Small ribosomal subunit protein uS15 (89 aa).

The protein belongs to the universal ribosomal protein uS15 family. As to quaternary structure, part of the 30S ribosomal subunit. Forms a bridge to the 50S subunit in the 70S ribosome, contacting the 23S rRNA.

Functionally, one of the primary rRNA binding proteins, it binds directly to 16S rRNA where it helps nucleate assembly of the platform of the 30S subunit by binding and bridging several RNA helices of the 16S rRNA. In terms of biological role, forms an intersubunit bridge (bridge B4) with the 23S rRNA of the 50S subunit in the ribosome. The protein is Small ribosomal subunit protein uS15 of Anaeromyxobacter sp. (strain Fw109-5).